The sequence spans 531 residues: Peptide chain release factor 3 (531 aa).

One can recognise a tr-type G domain in the interval 10 to 278 (RRRRTFAIIS…SLIDWAPAPK (269 aa)). GTP-binding positions include 19–26 (SHPDAGKT), 87–91 (DTPGH), and 141–144 (NKYD).

Belongs to the TRAFAC class translation factor GTPase superfamily. Classic translation factor GTPase family. PrfC subfamily.

The protein resides in the cytoplasm. In terms of biological role, increases the formation of ribosomal termination complexes and stimulates activities of RF-1 and RF-2. It binds guanine nucleotides and has strong preference for UGA stop codons. It may interact directly with the ribosome. The stimulation of RF-1 and RF-2 is significantly reduced by GTP and GDP, but not by GMP. The chain is Peptide chain release factor 3 from Neisseria gonorrhoeae (strain NCCP11945).